Consider the following 426-residue polypeptide: High affinity 3',5'-cyclic-AMP phosphodiesterase 7A (426 aa).

Residues L80–Q402 enclose the PDEase domain. H156 functions as the Proton donor in the catalytic mechanism. Residues H160, H196, D197, and D306 each contribute to the a divalent metal cation site.

Belongs to the cyclic nucleotide phosphodiesterase family. PDE7 subfamily. In terms of assembly, interacts with CBFA2T3. The cofactor is a divalent metal cation.

The protein resides in the cytoplasm. The protein localises to the cytosol. The enzyme catalyses 3',5'-cyclic AMP + H2O = AMP + H(+). The protein operates within purine metabolism; 3',5'-cyclic AMP degradation; AMP from 3',5'-cyclic AMP: step 1/1. Its function is as follows. Hydrolyzes the second messenger cAMP, which is a key regulator of many important physiological processes. May have a role in muscle signal transduction. This is High affinity 3',5'-cyclic-AMP phosphodiesterase 7A (Pde7a) from Rattus norvegicus (Rat).